We begin with the raw amino-acid sequence, 161 residues long: Protein-lysine N-methyltransferase (161 aa).

The DxGxGxG SAM-binding motif signature appears at 34–40 (DLGCGDG).

The protein belongs to the class I-like SAM-binding methyltransferase superfamily. Monomer.

It catalyses the reaction L-lysyl-[protein] + S-adenosyl-L-methionine = N(6)-methyl-L-lysyl-[protein] + S-adenosyl-L-homocysteine + H(+). Its function is as follows. Catalyzes the methylation of lysine residues in target proteins, using S-adenosyl-L-methionine (SAM) as the methyl donor. Exhibits broad substrate specificity, being able to methylate the crenarchaeal chromatin protein Cren7 primarily at 'Lys-11', 'Lys-16' and 'Lys-31', as well as a number of recombinant Sulfolobus proteins in vitro. Methylates lysine residues in a rather sequence-independent manner. This Saccharolobus islandicus (strain REY15A) (Sulfolobus islandicus) protein is Protein-lysine N-methyltransferase.